Consider the following 343-residue polypeptide: Olfactory receptor 1E3 (343 aa).

At 1–28 the chain is on the extracellular side; it reads MMKKNQTMISEFLLLGLPIQPEQQNLFY. Asn5 carries N-linked (GlcNAc...) asparagine glycosylation. The chain crosses the membrane as a helical span at residues 29 to 49; sequence ALFLAVYLTTLLGNLLVIVLI. Residues 50-107 are Cytoplasmic-facing; it reads RLDSHLHMPMYLCLSNLSFSDLCFSSVTMPKLLQNMQSQNPSIPFADCLAQMYFHLFY. Cys97 and Cys179 form a disulfide bridge. The helical transmembrane segment at 108-128 threads the bilayer; the sequence is GVLESFLLVVMAYHCYVAICF. The Extracellular portion of the chain corresponds to 129-141; that stretch reads PLHYTTIMSPKCC. The chain crosses the membrane as a helical span at residues 142–162; the sequence is LGLLTLSWLLTTAHATLHTLL. Residues 163 to 195 are Cytoplasmic-facing; that stretch reads MARLSFCAENVIPHFFCDTSTLLKLACSNTQVN. A helical transmembrane segment spans residues 196-216; sequence GWVMFFMGGLILVIPFLLLIM. Topologically, residues 217 to 242 are extracellular; sequence SCARIVSTILRVPSTGGIQKAFSTCG. The helical transmembrane segment at 243 to 263 threads the bilayer; it reads PHLSVVSLFYGTIIGLYLCPL. Over 264–271 the chain is Cytoplasmic; the sequence is TNHNTVKD. A helical transmembrane segment spans residues 272 to 292; sequence TVMAVMYTGVTHMLNPFIYSL. Topologically, residues 293–310 are extracellular; sequence RNRDMRGNPGQSLQHKEN. A helical transmembrane segment spans residues 311–331; sequence FFVFKIVIVGILPLLNLVGVV. Residues 332 to 343 lie on the Cytoplasmic side of the membrane; it reads KLIMKYHSKSVA.

The protein belongs to the G-protein coupled receptor 1 family.

It is found in the cell membrane. Its function is as follows. Odorant receptor. The polypeptide is Olfactory receptor 1E3 (OR1E3) (Homo sapiens (Human)).